We begin with the raw amino-acid sequence, 346 residues long: uncharacterized protein (346 aa).

Residue histidine 65 coordinates Zn(2+). The active site involves aspartate 67. Aspartate 89 contributes to the Zn(2+) binding site. The active-site Proton acceptor is glutamate 115. Residues glutamate 116, glutamate 145, and histidine 319 each coordinate Zn(2+).

It belongs to the peptidase M20A family. The cofactor is Zn(2+). It depends on Co(2+) as a cofactor.

This is an uncharacterized protein from Methanocaldococcus jannaschii (strain ATCC 43067 / DSM 2661 / JAL-1 / JCM 10045 / NBRC 100440) (Methanococcus jannaschii).